Consider the following 637-residue polypeptide: Glutamate--cysteine ligase catalytic subunit (637 aa).

The residue at position 1 (Met1) is an N-acetylmethionine. A phosphoserine mark is found at Ser5 and Ser8.

This sequence belongs to the glutamate--cysteine ligase type 3 family. Heterodimer of a catalytic heavy chain and a regulatory light chain.

It carries out the reaction L-cysteine + L-glutamate + ATP = gamma-L-glutamyl-L-cysteine + ADP + phosphate + H(+). The catalysed reaction is (2S)-2-aminobutanoate + L-glutamate + ATP = gamma-L-glutamyl-(2S)-2-aminobutanoate + ADP + phosphate + H(+). The protein operates within sulfur metabolism; glutathione biosynthesis; glutathione from L-cysteine and L-glutamate: step 1/2. With respect to regulation, feedback inhibition by glutathione. Its function is as follows. Catalyzes the ATP-dependent ligation of L-glutamate and L-cysteine and participates in the first and rate-limiting step in glutathione biosynthesis. The chain is Glutamate--cysteine ligase catalytic subunit from Mus musculus (Mouse).